A 189-amino-acid chain; its full sequence is 3-isopropylmalate dehydratase small subunit (189 aa).

The protein belongs to the LeuD family. LeuD type 1 subfamily. As to quaternary structure, heterodimer of LeuC and LeuD.

The catalysed reaction is (2R,3S)-3-isopropylmalate = (2S)-2-isopropylmalate. It participates in amino-acid biosynthesis; L-leucine biosynthesis; L-leucine from 3-methyl-2-oxobutanoate: step 2/4. Its function is as follows. Catalyzes the isomerization between 2-isopropylmalate and 3-isopropylmalate, via the formation of 2-isopropylmaleate. The sequence is that of 3-isopropylmalate dehydratase small subunit from Staphylococcus epidermidis (strain ATCC 35984 / DSM 28319 / BCRC 17069 / CCUG 31568 / BM 3577 / RP62A).